Here is an 88-residue protein sequence, read N- to C-terminus: Small ribosomal subunit protein uS15 (88 aa).

This sequence belongs to the universal ribosomal protein uS15 family. Part of the 30S ribosomal subunit. Forms a bridge to the 50S subunit in the 70S ribosome, contacting the 23S rRNA.

In terms of biological role, one of the primary rRNA binding proteins, it binds directly to 16S rRNA where it helps nucleate assembly of the platform of the 30S subunit by binding and bridging several RNA helices of the 16S rRNA. Functionally, forms an intersubunit bridge (bridge B4) with the 23S rRNA of the 50S subunit in the ribosome. This is Small ribosomal subunit protein uS15 from Borrelia turicatae (strain 91E135).